The chain runs to 187 residues: Adenine phosphoribosyltransferase (187 aa).

133-137 (ATGGS) contributes to the AMP binding site.

Belongs to the purine/pyrimidine phosphoribosyltransferase family. Homodimer. Mg(2+) is required as a cofactor.

The protein resides in the cytoplasm. It is found in the nucleus. The catalysed reaction is AMP + diphosphate = 5-phospho-alpha-D-ribose 1-diphosphate + adenine. It functions in the pathway purine metabolism; AMP biosynthesis via salvage pathway; AMP from adenine: step 1/1. In terms of biological role, catalyzes a salvage reaction resulting in the formation of AMP, that is energically less costly than de novo synthesis. In Eremothecium gossypii (strain ATCC 10895 / CBS 109.51 / FGSC 9923 / NRRL Y-1056) (Yeast), this protein is Adenine phosphoribosyltransferase (APT1).